The sequence spans 555 residues: CTP synthase (555 aa).

The segment at 1–271 is amidoligase domain; sequence MVKRGKKTKY…DDKLAELFNI (271 aa). Ser19 contacts CTP. Ser19 provides a ligand contact to UTP. Residues 20–25 and Asp77 contribute to the ATP site; that span reads SLGKGL. Residues Asp77 and Glu145 each coordinate Mg(2+). Residues 152 to 154, 192 to 197, and Lys228 contribute to the CTP site; these read DIE and KTKPTQ. UTP is bound by residues 192 to 197 and Lys228; that span reads KTKPTQ. In terms of domain architecture, Glutamine amidotransferase type-1 spans 297–537; the sequence is RIGIVGKYVE…VKAALEHRDA (241 aa). Residue Gly358 coordinates L-glutamine. Catalysis depends on Cys385, which acts as the Nucleophile; for glutamine hydrolysis. L-glutamine is bound by residues 386-389, Glu409, and Arg466; that span reads LGLQ. Residues His510 and Glu512 contribute to the active site. Residues 535–555 form a disordered region; the sequence is RDAQQRQPPAEVKKLAVGKNG.

This sequence belongs to the CTP synthase family. As to quaternary structure, homotetramer.

The catalysed reaction is UTP + L-glutamine + ATP + H2O = CTP + L-glutamate + ADP + phosphate + 2 H(+). It carries out the reaction L-glutamine + H2O = L-glutamate + NH4(+). It catalyses the reaction UTP + NH4(+) + ATP = CTP + ADP + phosphate + 2 H(+). It participates in pyrimidine metabolism; CTP biosynthesis via de novo pathway; CTP from UDP: step 2/2. Its activity is regulated as follows. Allosterically activated by GTP, when glutamine is the substrate; GTP has no effect on the reaction when ammonia is the substrate. The allosteric effector GTP functions by stabilizing the protein conformation that binds the tetrahedral intermediate(s) formed during glutamine hydrolysis. Inhibited by the product CTP, via allosteric rather than competitive inhibition. In terms of biological role, catalyzes the ATP-dependent amination of UTP to CTP with either L-glutamine or ammonia as the source of nitrogen. Regulates intracellular CTP levels through interactions with the four ribonucleotide triphosphates. The sequence is that of CTP synthase from Anaeromyxobacter sp. (strain K).